We begin with the raw amino-acid sequence, 171 residues long: 3-hydroxydecanoyl-[acyl-carrier-protein] dehydratase (171 aa).

The active site involves His-70.

Belongs to the thioester dehydratase family. FabA subfamily. As to quaternary structure, homodimer.

The protein localises to the cytoplasm. The enzyme catalyses a (3R)-hydroxyacyl-[ACP] = a (2E)-enoyl-[ACP] + H2O. It carries out the reaction (3R)-hydroxydecanoyl-[ACP] = (2E)-decenoyl-[ACP] + H2O. It catalyses the reaction (2E)-decenoyl-[ACP] = (3Z)-decenoyl-[ACP]. The protein operates within lipid metabolism; fatty acid biosynthesis. In terms of biological role, necessary for the introduction of cis unsaturation into fatty acids. Catalyzes the dehydration of (3R)-3-hydroxydecanoyl-ACP to E-(2)-decenoyl-ACP and then its isomerization to Z-(3)-decenoyl-ACP. Can catalyze the dehydratase reaction for beta-hydroxyacyl-ACPs with saturated chain lengths up to 16:0, being most active on intermediate chain length. The sequence is that of 3-hydroxydecanoyl-[acyl-carrier-protein] dehydratase from Pseudomonas aeruginosa (strain LESB58).